Reading from the N-terminus, the 404-residue chain is Glucose-1-phosphate adenylyltransferase (404 aa).

Alpha-D-glucose 1-phosphate contacts are provided by residues Tyr99, Gly164, 179–180 (EK), and Ser197.

Belongs to the bacterial/plant glucose-1-phosphate adenylyltransferase family.

The enzyme catalyses alpha-D-glucose 1-phosphate + ATP + H(+) = ADP-alpha-D-glucose + diphosphate. The protein operates within capsule biogenesis; capsule polysaccharide biosynthesis. It participates in glycan biosynthesis; glycogen biosynthesis. Functionally, involved in the biosynthesis of ADP-glucose, a building block, required in the biosynthesis of maltose-1-phosphate (M1P) and in the elongation reactions to produce linear alpha-1,4-glucans. Catalyzes the reaction between ATP and alpha-D-glucose 1-phosphate (G1P) to produce pyrophosphate and ADP-Glc. This Mycobacterium marinum (strain ATCC BAA-535 / M) protein is Glucose-1-phosphate adenylyltransferase.